Reading from the N-terminus, the 396-residue chain is MAKAKFERTKPHVNIGTIGHVDHGKTTLTAAITKVLAGKGQAEFKAFDQIDNAPEERERGITIATAHVEYETDKRHYAHVDCPGHADYVKNMITGAAQMDGAILVVSAADGPMPQTREHILLARQVGVPYIVVFLNKADMVDDEELLELVELEIRELLSSYDFPGDDIPIIKGSALKALEGDTGELGEQAIMKLMEAVDSYIPEPVRAIDKPFLMPVEDVFSISGRGTVATGRVERGIVKVGEEVEIVGMKATAKTTVTGVEMFRKLLDEGRAGDNIGALLRGVKREDIERGQVLAKPGSITPHTKFKAEAYILTKEEGGRHTPFFNGYRPQFYFRTTDVTGIVELAAGTEMVMPGDNVAVTVNLITPIAMDEGLRFAIREGGRTVGAGVVSSIIE.

The tr-type G domain occupies 10 to 206 (KPHVNIGTIG…AVDSYIPEPV (197 aa)). The G1 stretch occupies residues 19 to 26 (GHVDHGKT). 19-26 (GHVDHGKT) is a binding site for GTP. Threonine 26 serves as a coordination point for Mg(2+). A G2 region spans residues 60-64 (GITIA). Positions 81–84 (DCPG) are G3. GTP is bound by residues 81 to 85 (DCPGH) and 136 to 139 (NKAD). The interval 136–139 (NKAD) is G4. The interval 174–176 (SAL) is G5.

Belongs to the TRAFAC class translation factor GTPase superfamily. Classic translation factor GTPase family. EF-Tu/EF-1A subfamily. Monomer.

The protein resides in the cytoplasm. It carries out the reaction GTP + H2O = GDP + phosphate + H(+). Functionally, GTP hydrolase that promotes the GTP-dependent binding of aminoacyl-tRNA to the A-site of ribosomes during protein biosynthesis. This chain is Elongation factor Tu, found in Geotalea uraniireducens (strain Rf4) (Geobacter uraniireducens).